Reading from the N-terminus, the 410-residue chain is Putative ribonuclease E (410 aa).

One can recognise an S1 motif domain in the interval 39–119 (SNIYKGKIVR…GTKGALLTTF (81 aa)). 2 residues coordinate Mg(2+): Asp303 and Asp346.

It belongs to the RNase E/G family. RNase E subfamily. As to quaternary structure, component of the RNA degradosome, which is a multiprotein complex involved in RNA processing and mRNA degradation. Within the RNA degradosome, RNase E assembles into a homotetramer formed by a dimer of dimers. The cofactor is Mg(2+).

It localises to the cytoplasm. The protein localises to the cell inner membrane. It carries out the reaction Endonucleolytic cleavage of single-stranded RNA in A- and U-rich regions.. In terms of biological role, endoribonuclease that plays a central role in RNA processing and decay. Required for the maturation of 5S and 16S rRNAs and the majority of tRNAs. Also involved in the degradation of most mRNAs. This Buchnera aphidicola subsp. Baizongia pistaciae (strain Bp) protein is Putative ribonuclease E (rne).